Here is a 301-residue protein sequence, read N- to C-terminus: D-alanine--D-alanine ligase A (301 aa).

One can recognise an ATP-grasp domain in the interval 99-293 (KRILAFGNVR…FEELLDTIIE (195 aa)). 126–181 (IENLGYPVFVKPNNGGSSVATTLVESKEAVKDAVLEALKYDTEVMIEEYIKGDEIT) serves as a coordination point for ATP. Asp248, Glu260, and Asn262 together coordinate Mg(2+).

Belongs to the D-alanine--D-alanine ligase family. Mg(2+) is required as a cofactor. Mn(2+) serves as cofactor.

Its subcellular location is the cytoplasm. It carries out the reaction 2 D-alanine + ATP = D-alanyl-D-alanine + ADP + phosphate + H(+). The protein operates within cell wall biogenesis; peptidoglycan biosynthesis. Its function is as follows. Cell wall formation. The protein is D-alanine--D-alanine ligase A of Clostridium perfringens (strain 13 / Type A).